We begin with the raw amino-acid sequence, 402 residues long: Type II NADH:quinone oxidoreductase (402 aa).

FAD is bound by residues 12-16 (GAGYA), 39-40 (NK), and Val83. Residue Glu172 is part of the active site. FAD-binding positions include Asp302, 319-320 (AQ), and Lys379.

This sequence belongs to the NADH dehydrogenase family. FAD is required as a cofactor.

Its subcellular location is the cell membrane. It catalyses the reaction a quinone + NADH + H(+) = a quinol + NAD(+). Its function is as follows. Alternative, nonproton pumping NADH:quinone oxidoreductase that delivers electrons to the respiratory chain by oxidation of NADH and reduction of quinones, and contributes to the regeneration of NAD(+). This is Type II NADH:quinone oxidoreductase from Staphylococcus aureus (strain MSSA476).